A 59-amino-acid polypeptide reads, in one-letter code: Protein translocase subunit SecE (59 aa).

Residues 37–57 traverse the membrane as a helical segment; that stretch reads GIGIIIIGVIGFIISIIAQLL.

It belongs to the SecE/SEC61-gamma family. Component of the Sec protein translocase complex. Heterotrimer consisting of SecY (alpha), SecG (beta) and SecE (gamma) subunits. The heterotrimers can form oligomers, although 1 heterotrimer is thought to be able to translocate proteins. Interacts with the ribosome. May interact with SecDF, and other proteins may be involved.

It is found in the cell membrane. In terms of biological role, essential subunit of the Sec protein translocation channel SecYEG. Clamps together the 2 halves of SecY. May contact the channel plug during translocation. This Methanothermobacter thermautotrophicus (strain ATCC 29096 / DSM 1053 / JCM 10044 / NBRC 100330 / Delta H) (Methanobacterium thermoautotrophicum) protein is Protein translocase subunit SecE.